A 217-amino-acid polypeptide reads, in one-letter code: Pyrophosphatase PpaX (217 aa).

Asp11 serves as the catalytic Nucleophile.

This sequence belongs to the HAD-like hydrolase superfamily. PpaX family. Mg(2+) serves as cofactor.

The enzyme catalyses diphosphate + H2O = 2 phosphate + H(+). Hydrolyzes pyrophosphate formed during P-Ser-HPr dephosphorylation by HPrK/P. Might play a role in controlling the intracellular pyrophosphate pool. In Listeria welshimeri serovar 6b (strain ATCC 35897 / DSM 20650 / CCUG 15529 / CIP 8149 / NCTC 11857 / SLCC 5334 / V8), this protein is Pyrophosphatase PpaX.